We begin with the raw amino-acid sequence, 180 residues long: ATP synthase subunit delta (180 aa).

It belongs to the ATPase delta chain family. F-type ATPases have 2 components, F(1) - the catalytic core - and F(0) - the membrane proton channel. F(1) has five subunits: alpha(3), beta(3), gamma(1), delta(1), epsilon(1). F(0) has three main subunits: a(1), b(2) and c(10-14). The alpha and beta chains form an alternating ring which encloses part of the gamma chain. F(1) is attached to F(0) by a central stalk formed by the gamma and epsilon chains, while a peripheral stalk is formed by the delta and b chains.

The protein resides in the cell membrane. In terms of biological role, f(1)F(0) ATP synthase produces ATP from ADP in the presence of a proton or sodium gradient. F-type ATPases consist of two structural domains, F(1) containing the extramembraneous catalytic core and F(0) containing the membrane proton channel, linked together by a central stalk and a peripheral stalk. During catalysis, ATP synthesis in the catalytic domain of F(1) is coupled via a rotary mechanism of the central stalk subunits to proton translocation. Functionally, this protein is part of the stalk that links CF(0) to CF(1). It either transmits conformational changes from CF(0) to CF(1) or is implicated in proton conduction. This chain is ATP synthase subunit delta, found in Lactobacillus delbrueckii subsp. bulgaricus (strain ATCC 11842 / DSM 20081 / BCRC 10696 / JCM 1002 / NBRC 13953 / NCIMB 11778 / NCTC 12712 / WDCM 00102 / Lb 14).